The primary structure comprises 586 residues: Isocitrate dehydrogenase kinase/phosphatase (586 aa).

ATP contacts are provided by residues 316–322 (ARGDRGL) and Lys-337. Asp-372 is an active-site residue.

Belongs to the AceK family.

It localises to the cytoplasm. The enzyme catalyses L-seryl-[isocitrate dehydrogenase] + ATP = O-phospho-L-seryl-[isocitrate dehydrogenase] + ADP + H(+). Its function is as follows. Bifunctional enzyme which can phosphorylate or dephosphorylate isocitrate dehydrogenase (IDH) on a specific serine residue. This is a regulatory mechanism which enables bacteria to bypass the Krebs cycle via the glyoxylate shunt in response to the source of carbon. When bacteria are grown on glucose, IDH is fully active and unphosphorylated, but when grown on acetate or ethanol, the activity of IDH declines drastically concomitant with its phosphorylation. In Anaeromyxobacter dehalogenans (strain 2CP-C), this protein is Isocitrate dehydrogenase kinase/phosphatase.